The sequence spans 250 residues: Triosephosphate isomerase, cytosolic (250 aa).

Substrate is bound by residues Asn1 and Lys3. The active-site Electrophile is His87. Residue Glu160 is the Proton acceptor of the active site.

The protein belongs to the triosephosphate isomerase family. Homodimer.

The protein resides in the cytoplasm. It carries out the reaction D-glyceraldehyde 3-phosphate = dihydroxyacetone phosphate. It participates in carbohydrate biosynthesis; gluconeogenesis. Its pathway is carbohydrate degradation; glycolysis; D-glyceraldehyde 3-phosphate from glycerone phosphate: step 1/1. This chain is Triosephosphate isomerase, cytosolic (TPI1), found in Gracilaria gracilis (Red alga).